The following is a 755-amino-acid chain: Xaa-Pro dipeptidyl-peptidase (755 aa).

Active-site charge relay system residues include Ser-348, Asp-468, and His-498.

This sequence belongs to the peptidase S15 family. As to quaternary structure, homodimer.

The protein localises to the cytoplasm. It carries out the reaction Hydrolyzes Xaa-Pro-|- bonds to release unblocked, N-terminal dipeptides from substrates including Ala-Pro-|-p-nitroanilide and (sequentially) Tyr-Pro-|-Phe-Pro-|-Gly-Pro-|-Ile.. Removes N-terminal dipeptides sequentially from polypeptides having unsubstituted N-termini provided that the penultimate residue is proline. The polypeptide is Xaa-Pro dipeptidyl-peptidase (Streptococcus thermophilus (strain ATCC BAA-491 / LMD-9)).